Reading from the N-terminus, the 254-residue chain is Wall-associated protein (254 aa).

Positions 25-46 are disordered; that stretch reads DRVEPKEEPPKVPQAPKRDLKP.

The protein localises to the secreted. It localises to the cell wall. This Geobacillus stearothermophilus (Bacillus stearothermophilus) protein is Wall-associated protein (wapA').